The primary structure comprises 36 residues: DNA binding protein ORF8 (36 aa).

Belongs to the microviridae J protein family.

It localises to the virion. The protein localises to the host cytoplasm. Functionally, mediates ssDNA packaging into virion, it locates to the internal surface of the capsid. Additionally, plays a role in viral attachment to the host cell. The polypeptide is DNA binding protein ORF8 (Chlamydia phage 1 (Bacteriophage Chp1)).